The primary structure comprises 187 residues: Small ribosomal subunit protein uS5 (187 aa).

The segment at 1 to 20 (MAERENRRDRRDDRSREETP) is disordered. An S5 DRBM domain is found at 22–85 (FADRLVAINR…EQAKRQMIRV (64 aa)). Residues 154–174 (DGLKRESSPRQVAQRRGKKVA) are disordered.

It belongs to the universal ribosomal protein uS5 family. As to quaternary structure, part of the 30S ribosomal subunit. Contacts proteins S4 and S8.

Functionally, with S4 and S12 plays an important role in translational accuracy. In terms of biological role, located at the back of the 30S subunit body where it stabilizes the conformation of the head with respect to the body. The chain is Small ribosomal subunit protein uS5 from Cereibacter sphaeroides (strain ATCC 17025 / ATH 2.4.3) (Rhodobacter sphaeroides).